The chain runs to 291 residues: 5'-3' exonuclease (291 aa).

One can recognise a 5'-3' exonuclease domain in the interval 176–269 (TPKQVIEYKG…VHAALKPIDK (94 aa)).

5'-3' exonuclease acting preferentially on double-stranded DNA. The polypeptide is 5'-3' exonuclease (polA) (Mycoplasma pneumoniae (strain ATCC 29342 / M129 / Subtype 1) (Mycoplasmoides pneumoniae)).